Here is a 149-residue protein sequence, read N- to C-terminus: Large ribosomal subunit protein bL20m (149 aa).

The transit peptide at 1–9 (MVFLSAPLW) directs the protein to the mitochondrion.

Belongs to the bacterial ribosomal protein bL20 family. Component of the mitochondrial ribosome large subunit (39S) which comprises a 16S rRNA and about 50 distinct proteins. Interacts with OXA1L.

The protein resides in the mitochondrion. This is Large ribosomal subunit protein bL20m (MRPL20) from Bos taurus (Bovine).